A 315-amino-acid polypeptide reads, in one-letter code: Holliday junction branch migration complex subunit RuvB (315 aa).

A large ATPase domain (RuvB-L) region spans residues 1 to 168; that stretch reads MAKKQEIRPK…FGLIGQISNY (168 aa). Residues Ile7, Arg8, Gly49, Lys52, Thr53, Ser54, 115-117, Arg158, Tyr168, and Arg205 contribute to the ATP site; that span reads EDF. Position 53 (Thr53) interacts with Mg(2+). The segment at 169–239 is small ATPAse domain (RuvB-S); it reads QVEDIEKIIK…LVNKTLKQLG (71 aa). The interval 242 to 315 is head domain (RuvB-H); the sequence is ENGLNESQVK…QKGISYLERI (74 aa). DNA-binding residues include Lys297 and Arg302.

The protein belongs to the RuvB family. As to quaternary structure, homohexamer. Forms an RuvA(8)-RuvB(12)-Holliday junction (HJ) complex. HJ DNA is sandwiched between 2 RuvA tetramers; dsDNA enters through RuvA and exits via RuvB. An RuvB hexamer assembles on each DNA strand where it exits the tetramer. Each RuvB hexamer is contacted by two RuvA subunits (via domain III) on 2 adjacent RuvB subunits; this complex drives branch migration. In the full resolvosome a probable DNA-RuvA(4)-RuvB(12)-RuvC(2) complex forms which resolves the HJ.

Its subcellular location is the cytoplasm. It carries out the reaction ATP + H2O = ADP + phosphate + H(+). In terms of biological role, the RuvA-RuvB-RuvC complex processes Holliday junction (HJ) DNA during genetic recombination and DNA repair, while the RuvA-RuvB complex plays an important role in the rescue of blocked DNA replication forks via replication fork reversal (RFR). RuvA specifically binds to HJ cruciform DNA, conferring on it an open structure. The RuvB hexamer acts as an ATP-dependent pump, pulling dsDNA into and through the RuvAB complex. RuvB forms 2 homohexamers on either side of HJ DNA bound by 1 or 2 RuvA tetramers; 4 subunits per hexamer contact DNA at a time. Coordinated motions by a converter formed by DNA-disengaged RuvB subunits stimulates ATP hydrolysis and nucleotide exchange. Immobilization of the converter enables RuvB to convert the ATP-contained energy into a lever motion, pulling 2 nucleotides of DNA out of the RuvA tetramer per ATP hydrolyzed, thus driving DNA branch migration. The RuvB motors rotate together with the DNA substrate, which together with the progressing nucleotide cycle form the mechanistic basis for DNA recombination by continuous HJ branch migration. Branch migration allows RuvC to scan DNA until it finds its consensus sequence, where it cleaves and resolves cruciform DNA. The protein is Holliday junction branch migration complex subunit RuvB of Mycoplasmopsis pulmonis (strain UAB CTIP) (Mycoplasma pulmonis).